The following is a 280-amino-acid chain: NAD(P)H-quinone oxidoreductase subunit K, chloroplastic (280 aa).

C65, C66, C130, and C161 together coordinate [4Fe-4S] cluster. Residues 257 to 280 (LLKDWKQSNQKQEQNVKMMKEEEA) are disordered.

Belongs to the complex I 20 kDa subunit family. In terms of assembly, NDH is composed of at least 16 different subunits, 5 of which are encoded in the nucleus. [4Fe-4S] cluster is required as a cofactor.

The protein localises to the plastid. It is found in the chloroplast thylakoid membrane. The catalysed reaction is a plastoquinone + NADH + (n+1) H(+)(in) = a plastoquinol + NAD(+) + n H(+)(out). It catalyses the reaction a plastoquinone + NADPH + (n+1) H(+)(in) = a plastoquinol + NADP(+) + n H(+)(out). In terms of biological role, NDH shuttles electrons from NAD(P)H:plastoquinone, via FMN and iron-sulfur (Fe-S) centers, to quinones in the photosynthetic chain and possibly in a chloroplast respiratory chain. The immediate electron acceptor for the enzyme in this species is believed to be plastoquinone. Couples the redox reaction to proton translocation, and thus conserves the redox energy in a proton gradient. In Staurastrum punctulatum (Green alga), this protein is NAD(P)H-quinone oxidoreductase subunit K, chloroplastic.